The chain runs to 160 residues: MESEGKIVFTEEQEALVVKSWSVMKKNSAELGLKLFIKIFEIAPTTKKMFSFLRDSPIPAEQNPKLKPHAMSVFVMCCESAVQLRKTGKVTVRETTLKRLGASHSKYGVVDEHFEVAKYALLETIKEAVPEMWSPEMKVAWGQAYDHLVAAIKAEMNLSN.

One can recognise a Globin domain in the interval 8–157 (VFTEEQEALV…LVAAIKAEMN (150 aa)). The Homodimerization motif lies at 41–45 (EIAPT). Heme b-binding residues include S51, K65, H69, R99, S103, and H104. The short motif at 111–123 (DEHFEVAKYALLE) is the Homodimerization element.

It belongs to the plant globin family. In terms of assembly, homodimer. The cofactor is heme b. As to expression, expressed in roots and rosette leaves.

It is found in the cytoplasm. Its subcellular location is the nucleus. It carries out the reaction Fe(III)-heme b-[protein] + nitric oxide + H2O = Fe(II)-heme b-[protein] + nitrite + 2 H(+). Phytoglobin that reduces nitrite to nitric oxide (NO) under anoxic conditions (e.g. during flooding or in waterlogged soil). May not function as an oxygen storage or transport protein. Has an unusually high affinity for O(2) through an hexacoordinate heme iron because of a very low dissociation constant. The protein is Anaerobic nitrite reductase AHB1 of Arabidopsis thaliana (Mouse-ear cress).